Reading from the N-terminus, the 585-residue chain is A-type ATP synthase subunit A (585 aa).

231 to 238 (GPFGSGKT) serves as a coordination point for ATP.

It belongs to the ATPase alpha/beta chains family. In terms of assembly, has multiple subunits with at least A(3), B(3), C, D, E, F, H, I and proteolipid K(x).

It is found in the cell membrane. The catalysed reaction is ATP + H2O + 4 H(+)(in) = ADP + phosphate + 5 H(+)(out). Functionally, component of the A-type ATP synthase that produces ATP from ADP in the presence of a proton gradient across the membrane. The A chain is the catalytic subunit. The protein is A-type ATP synthase subunit A of Thermococcus onnurineus (strain NA1).